Here is a 270-residue protein sequence, read N- to C-terminus: Undecaprenyl-diphosphatase (270 aa).

Transmembrane regions (helical) follow at residues 3-23 (TIVT…LPVS), 42-62 (WAMF…VQYW), 86-106 (LLAA…YIDV), 108-128 (LGSP…ILVI), 184-204 (AEFS…LELL), 217-237 (VGWS…LAVI), and 249-269 (FKPF…WLAM).

This sequence belongs to the UppP family.

The protein localises to the cell inner membrane. It catalyses the reaction di-trans,octa-cis-undecaprenyl diphosphate + H2O = di-trans,octa-cis-undecaprenyl phosphate + phosphate + H(+). Functionally, catalyzes the dephosphorylation of undecaprenyl diphosphate (UPP). Confers resistance to bacitracin. In Novosphingobium aromaticivorans (strain ATCC 700278 / DSM 12444 / CCUG 56034 / CIP 105152 / NBRC 16084 / F199), this protein is Undecaprenyl-diphosphatase.